Consider the following 203-residue polypeptide: Guanylate kinase (203 aa).

The Guanylate kinase-like domain maps to 3 to 181 (GTLYIVAAPS…AVSEMCAIFT (179 aa)). 10-17 (APSGAGKS) serves as a coordination point for ATP.

Belongs to the guanylate kinase family.

It localises to the cytoplasm. The enzyme catalyses GMP + ATP = GDP + ADP. Functionally, essential for recycling GMP and indirectly, cGMP. This Xanthomonas axonopodis pv. citri (strain 306) protein is Guanylate kinase.